Reading from the N-terminus, the 308-residue chain is Nodulation protein D 1 (308 aa).

The 58-residue stretch at 6–63 (LDLNLLVALDALMTERNLTAAARSINLSQPAMSAAVGRLRVYFEDELFTMNGRELVLT) folds into the HTH lysR-type domain. The H-T-H motif DNA-binding region spans 23–42 (LTAAARSINLSQPAMSAAVG).

It belongs to the LysR transcriptional regulatory family.

In terms of biological role, nodD regulates the expression of the nodABCFE genes which encode other nodulation proteins. NodD is also a negative regulator of its own expression. Binds flavonoids as inducers. The polypeptide is Nodulation protein D 1 (nodD1) (Rhizobium tropici).